The following is a 388-amino-acid chain: LL-diaminopimelate aminotransferase (388 aa).

Residues Y13, G38, K102, Y126, and N176 each coordinate substrate. Pyridoxal 5'-phosphate-binding positions include 101 to 102 (SK), Y126, N176, Y207, and 235 to 237 (SLS). K238 is modified (N6-(pyridoxal phosphate)lysine). Residue R246 coordinates pyridoxal 5'-phosphate. Residue R364 coordinates substrate.

Belongs to the class-I pyridoxal-phosphate-dependent aminotransferase family. LL-diaminopimelate aminotransferase subfamily. In terms of assembly, homodimer. It depends on pyridoxal 5'-phosphate as a cofactor.

The catalysed reaction is (2S,6S)-2,6-diaminopimelate + 2-oxoglutarate = (S)-2,3,4,5-tetrahydrodipicolinate + L-glutamate + H2O + H(+). It participates in amino-acid biosynthesis; L-lysine biosynthesis via DAP pathway; LL-2,6-diaminopimelate from (S)-tetrahydrodipicolinate (aminotransferase route): step 1/1. In terms of biological role, involved in the synthesis of meso-diaminopimelate (m-DAP or DL-DAP), required for both lysine and peptidoglycan biosynthesis. Catalyzes the direct conversion of tetrahydrodipicolinate to LL-diaminopimelate. The polypeptide is LL-diaminopimelate aminotransferase (Dehalococcoides mccartyi (strain ATCC BAA-2266 / KCTC 15142 / 195) (Dehalococcoides ethenogenes (strain 195))).